Here is a 273-residue protein sequence, read N- to C-terminus: Epithelial sodium channel subunit beta (273 aa).

Residues 1 to 245 lie on the Extracellular side of the membrane; sequence NCYIFNWGQE…RSISESPTTN (245 aa). Intrachain disulfides connect Cys92/Cys179, Cys117/Cys175, Cys121/Cys171, Cys130/Cys157, and Cys132/Cys146. Residues 246 to 273 traverse the membrane as a helical segment; that stretch reads VVWLLSNLGGQFGFWMGGSVLCIIEFGE.

The protein belongs to the amiloride-sensitive sodium channel (TC 1.A.6) family. SCNN1B subfamily. As to quaternary structure, component of the heterotrimeric epithelial sodium channel (ENaC) composed of an alpha/SCNN1A, a beta/SCNN1B and a gamma/SCNN1G subunit.

The protein localises to the apical cell membrane. It localises to the cytoplasmic vesicle membrane. It catalyses the reaction Na(+)(in) = Na(+)(out). With respect to regulation, originally identified and characterized by its inhibition by the diuretic drug amiloride. This is one of the three pore-forming subunits of the heterotrimeric epithelial sodium channel (ENaC), a critical regulator of sodium balance and fluid homeostasis. ENaC operates in epithelial tissues, where it mediates the electrodiffusion of sodium ions from extracellular fluid through the apical membrane of cells, with water following osmotically. It plays a key role in maintaining sodium homeostasis through electrogenic sodium reabsorption in the kidneys. Additionally, ENaC is essential for airway surface liquid homeostasis, which is crucial for proper mucus clearance. The protein is Epithelial sodium channel subunit beta of Aquarana catesbeiana (American bullfrog).